A 309-amino-acid chain; its full sequence is Probable manganese-dependent inorganic pyrophosphatase (309 aa).

Residues histidine 9, aspartate 13, aspartate 15, aspartate 75, histidine 97, and aspartate 149 each coordinate Mn(2+).

The protein belongs to the PPase class C family. Mn(2+) is required as a cofactor.

The protein localises to the cytoplasm. It carries out the reaction diphosphate + H2O = 2 phosphate + H(+). The sequence is that of Probable manganese-dependent inorganic pyrophosphatase from Bacillus velezensis (strain DSM 23117 / BGSC 10A6 / LMG 26770 / FZB42) (Bacillus amyloliquefaciens subsp. plantarum).